Here is a 206-residue protein sequence, read N- to C-terminus: Dephospho-CoA kinase (206 aa).

In terms of domain architecture, DPCK spans 4–204 (VIGLTGGIAS…EGYIESHSED (201 aa)). 12 to 17 (ASGKST) contributes to the ATP binding site.

The protein belongs to the CoaE family.

It localises to the cytoplasm. The catalysed reaction is 3'-dephospho-CoA + ATP = ADP + CoA + H(+). It functions in the pathway cofactor biosynthesis; coenzyme A biosynthesis; CoA from (R)-pantothenate: step 5/5. Catalyzes the phosphorylation of the 3'-hydroxyl group of dephosphocoenzyme A to form coenzyme A. This chain is Dephospho-CoA kinase, found in Staphylococcus saprophyticus subsp. saprophyticus (strain ATCC 15305 / DSM 20229 / NCIMB 8711 / NCTC 7292 / S-41).